The sequence spans 4427 residues: MSSKAEKKQRLSGRGSSQASWSGRATRAAVATQEQGNAPAVSEPELQAELPKEEPEPRLEGPQAQSEESVEPEADVKPLFLSRAALTGLADAVWTQEHDAILEHFAQDPTESILTIFIDPCFGLKLELGMPVQTQNQLVYFIRQAPVPITWENFEATVQFGTVRGPYIPALLRLLGGVFAPQIFANTGWPESIRNHFASHLHKFLACLTDTRYKLEGHTVLYIPAEAMNMKPEMVIKDKELVQRLETSMIHWTRQIKEMLSAQETVETGENLGPLEEIEFWRNRCMDLSGISKQLVKKGVKHVESILHLAKSSYLAPFMKLAQQIQDGSRQAQSNLTFLSILKEPYQELAFMKPKDISSKLPKLISLIRIIWVNSPHYNTRERLTSLFRKVCDCQYHFARWEDGKQGPLPCFFGAQGPQITRNLLEIEDIFHKNLHTLRAVRGGILDVKNTCWHEDYNKFRAGIKDLEVMTQNLITSAFELVRDVPHGVLLLDTFHRLASREAIKRTYDKKAVDLYMLFNSELALVNRERNKKWPDLEPYVAQYSGKARWVHILRRRIDRVMTCLAGAHFLPRIGTGKESVHTYQQMVQAIDELVRKTFQEWTSSLDKDCIRRLDTPLLRISQEKAGMLDVNFDKSLLILFAEIDYWERLLFETPHYVVNVAERAEDLRILRENLLLVARDYNRIIAMLSPDEQALFKERIRLLDKKIHPGLKKLHWALKGASAFFITECRIHASKVQMIVNEFKASTLTIGWRAQEMSEKLLVRISGKRVYRDLEFEEDQREHRAAVQQKLMNLHQDVVTIMTNSYEVFKNDGPEIQQQWMLYMIRLDRMMEDALRLNVKWSLLELSKAINGDGKTSPNPLFQVLVILKNDLQGSVAQVEFSPTLQTLAGVVNDIGNHLFSTISVFCHLPDILTKRKLHREPIQTVVEQDEDIKKIQTQISSGMTNNASLLQNYLKTWDMYREIWEINKDSFIHRYQRLNPPVSSFVADIARYTEVANNVQKEETVTNIQFVLLDCSHLKFSLVQHCNEWQNKFATLLREMAAGRLLELHTYLKENAEKISRPPQTLEELGVSLQLVDALKHDLANVETQIPPIHEQFAILEKYEVPVEDSVLEMLDSLNGEWVVFQQTLLDSKQMLKKHKEKFKTGLIHSADDFKKKAHTLLEDFEFKGHFTSNVGYMSALDQITQVRAMLMAMREEENSLRANLGIFKIEQPPSKDLQNLEKELDALQQIWEIARDWEENWNEWKTGRFLILQTETMETTAHGLFRRLTKLAKEYKDRNWEIIETTRSKIEQFKRTMPLISDLRNPALRERHWDQVRDEIQREFDQESESFTLEQIVELGMDQHVEKIGEISASATKELAIEVALQNIAKTWDVTQLDIVPYKDKGHHRLRGTEEVFQALEDNQVALSTMKASRFVKAFEKDVDHWERCLSLILEVIEMILTVQRQWMYLENIFLGEDIRKQLPNESTLFDQVNSNWKAIMDRMNKDNNALRSTHHPGLLDTLIEMNTILEDIQKSLDMYLETKRHIFPRFYFLSNDDLLEILGQSRNPEAVQPHLKKCFDNIKLLRIQKVGGPSSKWEAVGMFSGDGEYIDFLHSVFLEGPVESWLGDVEQTMRVTLRDLLRNCHLALRKFLNKRDKWVKEWAGQVVITASQIQWTADVTKCLLTAKERADKKILKVMKKNQVSILNKYSEAIRGNLTKIMRLKIVALVTIEIHARDVLEKLYKSGLMDVNSFDWLSQLRFYWEKDLDDCVIRQTNTQFQYNYEYLGNSGRLVITPLTDRCYMTLTTALHLHRGGSPKGPAGTGKTETVKDLGKALGIYVIVVNCSEGLDYKSMGRMYSGLAQTGAWGCFDEFNRINIEVLSVVAHQILCILSALAAGLTHFHFDGFEINLVWSCGIFITMNPGYAGRTELPENLKSMFRPIAMVVPDSTLIAEIILFGEGFGNCKILAKKVYTLYSLAVQQLSRQDHYDFGLRALTSLLRYAGKKRRLQPDLTDEEVLLLSMRDMNIAKLTSVDAPLFNAIVQDLFPNIELPVIDYGKLRETVEQEIRDMGLQSTPFTLTKVFQLYETKNSRHSTMIVGCTGSGKTASWRILQASLSSLCRAGDPNFNIVREFPLNPKALSLGELYGEYDLSTNEWTDGILSSVMRTACADEKPDEKWILFDGPVDTLWIENMNSVMDDNKVLTLINGERIAMPEQVSLLFEVEDLAMASPATVSRCGMVYTDYADLGWKPYVQSWLEKRPKAEVEPLQRMFEKLINKMLAFKKDNCKELVPLPEYSGITSLCKLYSALATPENGVNPADGENYVTMVEMTFVFSMIWSVCASVDEEGRKRIDSYLREIEGSFPNKDTVYEYFVDPKIRSWTSFEDKLPKSWRYPPNAPFYKIMVPTVDTVRYNYLVSSLVANQNPILLVGPVGTGKTSIAQSVLQSLPSSQWSVLVVNMSAQTTSNNVQSIIESRVEKRTKGVYVPFGGKSMITFMDDLNMPAKDMFGSQPPLELIRLWIDYGFWYDRTKQTIKYIREMFLMAAMGPPGGGRTVISPRLRSRFNIINMTFPTKSQIIRIFGTMINQKLQDFEEEVKPIGNVVTEATLDMYNTVVQRFLPTPTKMHYLFNLRDISKVFQGMLRANKDFHDTKSSITRLWIHECFRVFSDRLVDAADTEAFMGIISDKLGSFFDLTFHHLCPSKRPPIFGDFLKEPKVYEDLTDLTVLKTVMETALNEYNLSPSVVPMQLVLFREAIEHITRIVRVIGQPRGNMLLVGIGGSGRQSLARLASSICDYTTFQIEVTKHYRKQEFRDDIKRLYRQAGVELKTTSFIFVDTQIADESFLEDINNILSSGEVPNLYKPDEFEEIQSHIIDQARVEQVPESSDSLFAYLIERVQNNLHIVLCLSPMGDPFRNWIRQYPALVNCTTINWFSEWPQEALLEVAEKCLIGVDLGTQENIHRKVAQIFVTMHWSVAQYSQKMLLELRRHNYVTPTKYLELLSGYKKLLGEKRQELLAQANKLRTGLFKIDETREKVQVMSLELEDAKKKVAEFQKQCEEYLVIIVQQKREADEQQKAVTANSEKIAVEEIKCQALADNAQKDLEEALPALEEAMRALESLNKKDIGEIKSYGRPPAQVEIVMQAVMILRGNEPTWAEAKRQLGEQNFIKSLINFDKDNISDKVLKKIGAYCAQPDFQPDIIGRVSLAAKSLCMWVRAMELYGRLYRVVEPKRIRMNAALAQLREKQAALAEAQEKLREVAEKLEMLKKQYDEKLAQKEELRKKSEEMELKLERAGMLVSGLAGEKARWEETVQGLEEDLGYLVGDCLLAAAFLSYMGPFLTNYRDEIVNQIWIGKIWELQVPCSPSFAIDNFLCNPTKVRDWNIQGLPSDAFSTENGIIVTRGNRWALMIDPQAQALKWIKNMEGGQGLKIIDLQMSDYLRILEHAIHFGYPVLLQNVQEYLDPTLNPMLNKSVARIGGRLLMRIGDKEVEYNTNFRFYITTKLSNPHYSPETSAKTTIVNFAVKEQGLEAQLLGIVVRKERPELEEQKDSLVINIAAGKRKLKELEDEILRLLNEATGSLLDDVQLVNTLHTSKITATEVTEQLETSETTEINTDLAREAYRPCAQRASILFFVLNDMGCIDPMYQFSLDAYISLFILSIDKSHRSNKLEDRIDYLNDYHTYAVYRYTCRTLFERHKLLFSFHMCAKILETSGKLNMDEYNFFLRGGVVLDREGQMDNPCSSWLADAYWDNITELDKLTNFHGLMNSFEQYPRDWHLWYTNAAPEKAMLPGEWENACNEMQRMLIVRSLRQDRVAFCVTSFIITNLGSRFIEPPVLNMKSVLEDSTPRSPLVFILSPGVDPTSALLQLAEHMGMAQRFHALSLGQGQAPIAARLLREGVTQGHWVFLANCHLSLSWMPNLDKLVEQLQVEDPHPSFRLWLSSIPHPDFPISILQVSIKMTTEPPKGLKANMTRLYQLMSEPQFSRCSKPAKYKKLLFSLCFFHSVLLERKKFLQLGWNIIYGFNDSDFEVSENLLSLYLDEYEETPWDALKYLIAGINYGGHVTDDWDRRLLTTYINDYFCDQSLSTPFHRLSALETYFIPKDGSLASYKEYISLLPGMDPPEAFGQHPNADVASQITEAQTLFDTLLSLQPQITPTRAGGQTREEKVLELAADVKQKIPEMIDYEGTQKLLALDPSPLNVVLLQEIQRYNTLMQTILFSLTDLEKGIQGLIVMSTSLEEIFNCIFDAHVPPLWGKAYPSQKPLAAWTRDLAMRVEQFELWASRARPPVIFWLSGFTFPTGFLTAVLQSSARQNNVSVDSLSWEFIVSTVDDSNLVYPPKDGVWVRGLYLEGAGWDRKNSCLVEAEPMQLVCLMPTIHFRPAESRKKSAKGMYSCPCYYYPNRAGSSDRASFVIGIDLRSGAMTPDHWIKRGTALLMSLDS.

Residues 1–73 (MSSKAEKKQR…AQSEESVEPE (73 aa)) are disordered. The tract at residues 1 to 1764 (MSSKAEKKQR…VIRQTNTQFQ (1764 aa)) is stem. Residues 14 to 23 (RGSSQASWSG) are compositionally biased toward polar residues. Positions 50 to 59 (LPKEEPEPRL) are enriched in basic and acidic residues. The TPR 1 repeat unit spans residues 1404–1439 (EDNQVALSTMKASRFVKAFEKDVDHWERCLSLILEV). AAA stretches follow at residues 1765–1986 (YNYE…LLRY), 2046–2273 (ETVE…DNCK), 2378–2625 (RYPP…VFQG), and 2722–2974 (EYNL…LRRH). Residues 1803 to 1810 (GPAGTGKT), 2084 to 2091 (GCTGSGKT), and 2416 to 2423 (GPVGTGKT) contribute to the ATP site. The stretch at 2721 to 2754 (NEYNLSPSVVPMQLVLFREAIEHITRIVRVIGQP) is one TPR 2 repeat. 2762-2769 (GIGGSGRQ) contributes to the ATP binding site. The segment at 2989–3272 (YKKLLGEKRQ…EELRKKSEEM (284 aa)) is stalk. Residues 3012 to 3049 (FKIDETREKVQVMSLELEDAKKKVAEFQKQCEEYLVII) are a coiled coil. A TPR 3 repeat occupies 3072 to 3105 (VEEIKCQALADNAQKDLEEALPALEEAMRALESL). Coiled-coil stretches lie at residues 3216-3304 (KRIR…EEDL) and 3523-3567 (VRKE…GSLL). 2 AAA regions span residues 3358–3588 (LCNP…EVTE) and 3804–4023 (VTSF…LLSL). 2 TPR repeats span residues 4072–4104 (STPF…LLPG) and 4105–4140 (MDPP…QPQI).

Belongs to the dynein heavy chain family. Part of the axonemal inner dynein arm complex that consists of at least two heavy chains and a number of intermediate and light chains. Interacts with DNAI4. Expressed primarily in trachea and testis, 2 tissues containing axonemal structures. Also expressed in lung. Expressed in spermatozoa (at protein level).

It localises to the cytoplasm. It is found in the cytoskeleton. Its subcellular location is the cilium axoneme. The protein localises to the flagellum axoneme. Functionally, as part of the axonemal inner dynein arm complex plays a central role in ciliary beat. Expressed in sperm flagellum, it is required for sperm motility. Dyneins are microtubule-based molecular motors possessing ATPase activities that can convert the chemical energy of ATP into relative sliding between adjacent microtubule doublets to generate ciliary bending. The sequence is that of Dynein axonemal heavy chain 2 from Homo sapiens (Human).